The sequence spans 1100 residues: Guanylate cyclase 2G (1100 aa).

The signal sequence occupies residues 1–43; that stretch reads MASRTRSESPLEPRLYAGAGSRADHPSLVLMLSVVMLVTCLEA. The Extracellular portion of the chain corresponds to 44–481; it reads AKLTVGFHAP…VAGMTVTVTA (438 aa). N-linked (GlcNAc...) asparagine glycans are attached at residues Asn55, Asn85, Asn94, Asn217, Asn225, Asn238, Asn418, Asn440, and Asn443. The chain crosses the membrane as a helical span at residues 482–502; it reads VIPTVTFLVLASAAAITGLML. At 503–1100 the chain is on the cytoplasmic side; that stretch reads WRLRGKVQSH…EEEAKVSEIL (598 aa). One can recognise a Protein kinase domain in the interval 546-837; the sequence is SDTSTVKASA…EASPRGHVSI (292 aa). The 131-residue stretch at 901-1031 folds into the Guanylate cyclase domain; that stretch reads TIFFSDIVGF…DTVNMASRME (131 aa).

Belongs to the adenylyl cyclase class-4/guanylyl cyclase family. Homooligomer. In vitro interacts with NPR1/GC-A. In terms of processing, N-glycosylated. As to expression, highly expressed in testis.

It localises to the cell membrane. The catalysed reaction is GTP = 3',5'-cyclic GMP + diphosphate. The sequence is that of Guanylate cyclase 2G (Gucy2g) from Mus musculus (Mouse).